We begin with the raw amino-acid sequence, 517 residues long: ATP synthase subunit beta (517 aa).

167–174 (GGAGVGKT) is an ATP binding site. 2 stretches are compositionally biased toward basic and acidic residues: residues 475–484 (AESMGAKMDD) and 495–508 (DSKD…KADD). The interval 475–517 (AESMGAKMDDGGSDGAPPPSDSKDKGKGDSKADDKGDDADKDA) is disordered.

This sequence belongs to the ATPase alpha/beta chains family. As to quaternary structure, F-type ATPases have 2 components, CF(1) - the catalytic core - and CF(0) - the membrane proton channel. CF(1) has five subunits: alpha(3), beta(3), gamma(1), delta(1), epsilon(1). CF(0) has three main subunits: a(1), b(2) and c(9-12). The alpha and beta chains form an alternating ring which encloses part of the gamma chain. CF(1) is attached to CF(0) by a central stalk formed by the gamma and epsilon chains, while a peripheral stalk is formed by the delta and b chains.

It is found in the cell membrane. It carries out the reaction ATP + H2O + 4 H(+)(in) = ADP + phosphate + 5 H(+)(out). In terms of biological role, produces ATP from ADP in the presence of a proton gradient across the membrane. The catalytic sites are hosted primarily by the beta subunits. The chain is ATP synthase subunit beta from Mycobacterium sp. (strain JLS).